Here is a 286-residue protein sequence, read N- to C-terminus: Bifunctional protein FolD (286 aa).

Residues 165–167 (GRS), serine 190, and valine 231 contribute to the NADP(+) site.

The protein belongs to the tetrahydrofolate dehydrogenase/cyclohydrolase family. Homodimer.

It catalyses the reaction (6R)-5,10-methylene-5,6,7,8-tetrahydrofolate + NADP(+) = (6R)-5,10-methenyltetrahydrofolate + NADPH. The enzyme catalyses (6R)-5,10-methenyltetrahydrofolate + H2O = (6R)-10-formyltetrahydrofolate + H(+). Its pathway is one-carbon metabolism; tetrahydrofolate interconversion. Its function is as follows. Catalyzes the oxidation of 5,10-methylenetetrahydrofolate to 5,10-methenyltetrahydrofolate and then the hydrolysis of 5,10-methenyltetrahydrofolate to 10-formyltetrahydrofolate. In Bacillus cereus (strain ATCC 14579 / DSM 31 / CCUG 7414 / JCM 2152 / NBRC 15305 / NCIMB 9373 / NCTC 2599 / NRRL B-3711), this protein is Bifunctional protein FolD.